The following is a 340-amino-acid chain: tRNA dimethylallyltransferase (340 aa).

The tract at residues 1 to 25 (MDQNRSPNGRDCREPPSPSSTARPG) is disordered. Residue 31–38 (GPTATGKS) participates in ATP binding. Residue 33-38 (TATGKS) coordinates substrate. Positions 56-59 (DSRQ) are interaction with substrate tRNA.

This sequence belongs to the IPP transferase family. Monomer. The cofactor is Mg(2+).

It carries out the reaction adenosine(37) in tRNA + dimethylallyl diphosphate = N(6)-dimethylallyladenosine(37) in tRNA + diphosphate. In terms of biological role, catalyzes the transfer of a dimethylallyl group onto the adenine at position 37 in tRNAs that read codons beginning with uridine, leading to the formation of N6-(dimethylallyl)adenosine (i(6)A). The sequence is that of tRNA dimethylallyltransferase from Synechococcus sp. (strain JA-3-3Ab) (Cyanobacteria bacterium Yellowstone A-Prime).